Here is a 511-residue protein sequence, read N- to C-terminus: AMP phosphorylase (511 aa).

Residues glycine 168, 194-199 (SRAITS), and threonine 203 contribute to the AMP site. The active-site Proton donor is aspartate 256. Positions 262 and 286 each coordinate AMP.

It belongs to the thymidine/pyrimidine-nucleoside phosphorylase family. Type 2 subfamily.

It catalyses the reaction AMP + phosphate = alpha-D-ribose 1,5-bisphosphate + adenine. The catalysed reaction is CMP + phosphate = cytosine + alpha-D-ribose 1,5-bisphosphate. The enzyme catalyses UMP + phosphate = alpha-D-ribose 1,5-bisphosphate + uracil. Catalyzes the conversion of AMP and phosphate to adenine and ribose 1,5-bisphosphate (R15P). Exhibits phosphorylase activity toward CMP and UMP in addition to AMP. Functions in an archaeal AMP degradation pathway, together with R15P isomerase and RubisCO. In Thermofilum pendens (strain DSM 2475 / Hrk 5), this protein is AMP phosphorylase.